A 105-amino-acid polypeptide reads, in one-letter code: UPF0235 protein RPR_04990 (105 aa).

Belongs to the UPF0235 family.

This chain is UPF0235 protein RPR_04990, found in Rickettsia peacockii (strain Rustic).